Consider the following 107-residue polypeptide: Large ribosomal subunit protein uL24 (107 aa).

The protein belongs to the universal ribosomal protein uL24 family. In terms of assembly, part of the 50S ribosomal subunit.

One of two assembly initiator proteins, it binds directly to the 5'-end of the 23S rRNA, where it nucleates assembly of the 50S subunit. Functionally, one of the proteins that surrounds the polypeptide exit tunnel on the outside of the subunit. The chain is Large ribosomal subunit protein uL24 from Mesomycoplasma hyopneumoniae (strain 7448) (Mycoplasma hyopneumoniae).